The following is a 288-amino-acid chain: Phosphate import ATP-binding protein PstB (288 aa).

Residues 42-283 enclose the ABC transporter domain; sequence IRDLNFYYEN…PKEKKTRDYI (242 aa). 74 to 81 is a binding site for ATP; sequence GPSGCGKS.

This sequence belongs to the ABC transporter superfamily. Phosphate importer (TC 3.A.1.7) family. In terms of assembly, the complex is composed of two ATP-binding proteins (PstB), two transmembrane proteins (PstC and PstA) and a solute-binding protein (PstS).

The protein resides in the cell membrane. The enzyme catalyses phosphate(out) + ATP + H2O = ADP + 2 phosphate(in) + H(+). Part of the ABC transporter complex PstSACB involved in phosphate import. Responsible for energy coupling to the transport system. In Malacoplasma penetrans (strain HF-2) (Mycoplasma penetrans), this protein is Phosphate import ATP-binding protein PstB.